A 44-amino-acid chain; its full sequence is uncharacterized protein (44 aa).

A helical membrane pass occupies residues 19–39 (AVGFVVSFGFFAFLFVMATVI).

It is found in the cell membrane. This is an uncharacterized protein from Bacillus subtilis (strain 168).